Reading from the N-terminus, the 131-residue chain is Profilin-2 (131 aa).

The protein belongs to the profilin family. In terms of assembly, occurs in many kinds of cells as a complex with monomeric actin in a 1:1 ratio.

It is found in the cytoplasm. The protein localises to the cytoskeleton. Its function is as follows. Binds to actin and affects the structure of the cytoskeleton. At high concentrations, profilin prevents the polymerization of actin, whereas it enhances it at low concentrations. By binding to PIP2, it inhibits the formation of IP3 and DG. This Solanum lycopersicum (Tomato) protein is Profilin-2.